Reading from the N-terminus, the 396-residue chain is Elongation factor Tu 2 (396 aa).

One can recognise a tr-type G domain in the interval 10–206 (KLHVNVGTIG…ALDTFIPDPT (197 aa)). The interval 19 to 26 (GHVDHGKT) is G1. Residue 19-26 (GHVDHGKT) coordinates GTP. Residue Thr26 coordinates Mg(2+). Residues 60-64 (GITIS) are G2. The segment at 81 to 84 (DCPG) is G3. GTP contacts are provided by residues 81-85 (DCPGH) and 136-139 (NKAD). The G4 stretch occupies residues 136 to 139 (NKAD). Residues 174-176 (SAR) form a G5 region.

This sequence belongs to the TRAFAC class translation factor GTPase superfamily. Classic translation factor GTPase family. EF-Tu/EF-1A subfamily. As to quaternary structure, monomer.

Its subcellular location is the cytoplasm. The catalysed reaction is GTP + H2O = GDP + phosphate + H(+). Its function is as follows. GTP hydrolase that promotes the GTP-dependent binding of aminoacyl-tRNA to the A-site of ribosomes during protein biosynthesis. The polypeptide is Elongation factor Tu 2 (Xanthomonas campestris pv. campestris (strain 8004)).